Consider the following 129-residue polypeptide: Small ribosomal subunit protein uS11 (129 aa).

Belongs to the universal ribosomal protein uS11 family. In terms of assembly, part of the 30S ribosomal subunit. Interacts with proteins S7 and S18. Binds to IF-3.

Located on the platform of the 30S subunit, it bridges several disparate RNA helices of the 16S rRNA. Forms part of the Shine-Dalgarno cleft in the 70S ribosome. In Hahella chejuensis (strain KCTC 2396), this protein is Small ribosomal subunit protein uS11.